The primary structure comprises 209 residues: MSKVHVFDHPLIQHKLSYIRDMNTGTKEFRELVDEVGMLMAYEVTRDLELQDVEIKTPVTTMTAKRLAGKKLAIVPILRAGLGMTDGVLSLVPAARVGHIGLYRDPNTLKAVEYFAKLPQDIDERQIIVVDPMLATGASAIEAINSLKKRGAKNIRFMCLIAAPEGVEKMQEAHDDVDIYIAALDEKLNDKAYITPGLGDAGDRLFGTK.

Residues arginine 79, arginine 104, and 131-139 each bind 5-phospho-alpha-D-ribose 1-diphosphate; that span reads DPMLATGAS. Uracil is bound by residues isoleucine 194 and 199 to 201; that span reads GDA. Aspartate 200 is a 5-phospho-alpha-D-ribose 1-diphosphate binding site.

This sequence belongs to the UPRTase family. Mg(2+) is required as a cofactor.

It catalyses the reaction UMP + diphosphate = 5-phospho-alpha-D-ribose 1-diphosphate + uracil. It participates in pyrimidine metabolism; UMP biosynthesis via salvage pathway; UMP from uracil: step 1/1. Its activity is regulated as follows. Allosterically activated by GTP. Functionally, catalyzes the conversion of uracil and 5-phospho-alpha-D-ribose 1-diphosphate (PRPP) to UMP and diphosphate. The protein is Uracil phosphoribosyltransferase of Staphylococcus haemolyticus (strain JCSC1435).